We begin with the raw amino-acid sequence, 187 residues long: Large ribosomal subunit protein bL21 (187 aa).

Positions 157–187 (KVAKKAVKKTVKKATKTGAKKKAAKKTSKKA) are disordered.

This sequence belongs to the bacterial ribosomal protein bL21 family. As to quaternary structure, part of the 50S ribosomal subunit. Contacts protein L20.

Its function is as follows. This protein binds to 23S rRNA in the presence of protein L20. This chain is Large ribosomal subunit protein bL21, found in Bdellovibrio bacteriovorus (strain ATCC 15356 / DSM 50701 / NCIMB 9529 / HD100).